A 449-amino-acid polypeptide reads, in one-letter code: Tubulin alpha-2 chain (449 aa).

8 residues coordinate GTP: glutamine 11, glutamate 71, serine 140, glycine 144, threonine 145, threonine 179, asparagine 206, and asparagine 228. Glutamate 71 serves as a coordination point for Mg(2+). Residue glutamate 254 is part of the active site.

This sequence belongs to the tubulin family. As to quaternary structure, dimer of alpha and beta chains. A typical microtubule is a hollow water-filled tube with an outer diameter of 25 nm and an inner diameter of 15 nM. Alpha-beta heterodimers associate head-to-tail to form protofilaments running lengthwise along the microtubule wall with the beta-tubulin subunit facing the microtubule plus end conferring a structural polarity. Microtubules usually have 13 protofilaments but different protofilament numbers can be found in some organisms and specialized cells. Mg(2+) is required as a cofactor.

It localises to the cytoplasm. The protein resides in the cytoskeleton. The enzyme catalyses GTP + H2O = GDP + phosphate + H(+). Its function is as follows. Tubulin is the major constituent of microtubules, a cylinder consisting of laterally associated linear protofilaments composed of alpha- and beta-tubulin heterodimers. Microtubules grow by the addition of GTP-tubulin dimers to the microtubule end, where a stabilizing cap forms. Below the cap, tubulin dimers are in GDP-bound state, owing to GTPase activity of alpha-tubulin. This chain is Tubulin alpha-2 chain (tub1), found in Schizosaccharomyces pombe (strain 972 / ATCC 24843) (Fission yeast).